A 233-amino-acid polypeptide reads, in one-letter code: Biosynthetic peptidoglycan transglycosylase (233 aa).

A helical transmembrane segment spans residues 8–28 (LIALPVGIFIFFNAYVYGNII).

It belongs to the glycosyltransferase 51 family.

It localises to the cell inner membrane. The catalysed reaction is [GlcNAc-(1-&gt;4)-Mur2Ac(oyl-L-Ala-gamma-D-Glu-L-Lys-D-Ala-D-Ala)](n)-di-trans,octa-cis-undecaprenyl diphosphate + beta-D-GlcNAc-(1-&gt;4)-Mur2Ac(oyl-L-Ala-gamma-D-Glu-L-Lys-D-Ala-D-Ala)-di-trans,octa-cis-undecaprenyl diphosphate = [GlcNAc-(1-&gt;4)-Mur2Ac(oyl-L-Ala-gamma-D-Glu-L-Lys-D-Ala-D-Ala)](n+1)-di-trans,octa-cis-undecaprenyl diphosphate + di-trans,octa-cis-undecaprenyl diphosphate + H(+). It functions in the pathway cell wall biogenesis; peptidoglycan biosynthesis. Peptidoglycan polymerase that catalyzes glycan chain elongation from lipid-linked precursors. This is Biosynthetic peptidoglycan transglycosylase from Neisseria gonorrhoeae (strain ATCC 700825 / FA 1090).